Consider the following 142-residue polypeptide: Large ribosomal subunit protein uL13 (142 aa).

Belongs to the universal ribosomal protein uL13 family. Part of the 50S ribosomal subunit.

In terms of biological role, this protein is one of the early assembly proteins of the 50S ribosomal subunit, although it is not seen to bind rRNA by itself. It is important during the early stages of 50S assembly. This is Large ribosomal subunit protein uL13 from Xylella fastidiosa (strain 9a5c).